A 604-amino-acid chain; its full sequence is 2-isopropylmalate synthase 2, mitochondrial (604 aa).

Residues 1–50 (MVKHSFIALAEHASKLRRSIPPVKLTYKNMLRDPSVKYRAFAPPKMVKRI) constitute a mitochondrion transit peptide. Residues 60 to 335 (PRWLSTDLRD…SPNLDFSDLT (276 aa)) enclose the Pyruvate carboxyltransferase domain. D69, H274, H276, and N310 together coordinate a divalent metal cation.

This sequence belongs to the alpha-IPM synthase/homocitrate synthase family. LeuA type 2 subfamily. In terms of assembly, homodimer. Requires a divalent metal cation as cofactor.

It is found in the mitochondrion. It carries out the reaction 3-methyl-2-oxobutanoate + acetyl-CoA + H2O = (2S)-2-isopropylmalate + CoA + H(+). It functions in the pathway amino-acid biosynthesis; L-leucine biosynthesis; L-leucine from 3-methyl-2-oxobutanoate: step 1/4. Its function is as follows. Catalyzes the condensation of the acetyl group of acetyl-CoA with 3-methyl-2-oxobutanoate (2-oxoisovalerate) to form 3-carboxy-3-hydroxy-4-methylpentanoate (2-isopropylmalate). Redundant to LEU4, responsible for about 20% of alpha-IPMS activity. Involved in leucine synthesis. In Saccharomyces cerevisiae (strain ATCC 204508 / S288c) (Baker's yeast), this protein is 2-isopropylmalate synthase 2, mitochondrial.